A 290-amino-acid polypeptide reads, in one-letter code: MNSGPGKKPDWLKIKLASGSSFASTRKLLNRHSLHTVCRSAMCPNLHECWSKGTATFLLLGNVCTRSCRFCAVGTECRPAMPDPEEPSKIAEAVKTMKLRHAVLTSVNRDDLADGGATHWVETIRAIREVNPGVSLECLIPDFSGNEQSLDLVMQELPEVLNHNIETVPSRYAAVRPQALYERSLAVIERAKRQFRLATKSGMMVGMGETEEELEASLHDLRGHGCDMVTIGQYLQPTAAHLPVSRYVTPEEFERYREIALDAGFRHVQSGPFVRSSYHAEAFEPVEKIS.

Residues Cys-38, Cys-43, Cys-49, Cys-64, Cys-68, Cys-71, and Ser-277 each contribute to the [4Fe-4S] cluster site. One can recognise a Radical SAM core domain in the interval 50 to 266 (WSKGTATFLL…REIALDAGFR (217 aa)).

This sequence belongs to the radical SAM superfamily. Lipoyl synthase family. [4Fe-4S] cluster is required as a cofactor.

It localises to the cytoplasm. The enzyme catalyses [[Fe-S] cluster scaffold protein carrying a second [4Fe-4S](2+) cluster] + N(6)-octanoyl-L-lysyl-[protein] + 2 oxidized [2Fe-2S]-[ferredoxin] + 2 S-adenosyl-L-methionine + 4 H(+) = [[Fe-S] cluster scaffold protein] + N(6)-[(R)-dihydrolipoyl]-L-lysyl-[protein] + 4 Fe(3+) + 2 hydrogen sulfide + 2 5'-deoxyadenosine + 2 L-methionine + 2 reduced [2Fe-2S]-[ferredoxin]. Its pathway is protein modification; protein lipoylation via endogenous pathway; protein N(6)-(lipoyl)lysine from octanoyl-[acyl-carrier-protein]: step 2/2. Its function is as follows. Catalyzes the radical-mediated insertion of two sulfur atoms into the C-6 and C-8 positions of the octanoyl moiety bound to the lipoyl domains of lipoate-dependent enzymes, thereby converting the octanoylated domains into lipoylated derivatives. The chain is Lipoyl synthase from Chlorobaculum tepidum (strain ATCC 49652 / DSM 12025 / NBRC 103806 / TLS) (Chlorobium tepidum).